Reading from the N-terminus, the 205-residue chain is Ephrin-A1 (205 aa).

A signal peptide spans 1 to 18 (MEFLWAPLLGLCCSLAAA). Residues 19–151 (DRHTVFWNSS…KLKVTVSGKI (133 aa)) form the Ephrin RBD domain. Asparagine 26 carries N-linked (GlcNAc...) asparagine glycosylation. Intrachain disulfides connect cysteine 51-cysteine 92 and cysteine 80-cysteine 140. Serine 182 is lipidated: GPI-anchor amidated serine. The propeptide at 183 to 205 (AAPRLSPLAWAVLLLPFLLLQTS) is removed in mature form.

Belongs to the ephrin family. In terms of assembly, monomer. Homodimer. Forms heterodimers with EPHA2. Binds to the receptor tyrosine kinases EPHA2, EPHA3, EPHA4, EPHA5, EPHA6 and EPHA7. Also binds with low affinity to EPHA1. Undergoes proteolysis by a metalloprotease to give rise to a soluble monomeric form. Post-translationally, N-Glycosylation is required for binding to EPHA2 receptor and inducing its internalization.

It localises to the cell membrane. The protein localises to the secreted. Its function is as follows. Cell surface GPI-bound ligand for Eph receptors, a family of receptor tyrosine kinases which are crucial for migration, repulsion and adhesion during neuronal, vascular and epithelial development. Binds promiscuously Eph receptors residing on adjacent cells, leading to contact-dependent bidirectional signaling into neighboring cells. Plays an important role in angiogenesis and tumor neovascularization. The recruitment of VAV2, VAV3 and PI3-kinase p85 subunit by phosphorylated EPHA2 is critical for EFNA1-induced RAC1 GTPase activation and vascular endothelial cell migration and assembly. Exerts anti-oncogenic effects in tumor cells through activation and down-regulation of EPHA2. Activates EPHA2 by inducing tyrosine phosphorylation which leads to its internalization and degradation. Acts as a negative regulator in the tumorigenesis of gliomas by down-regulating EPHA2 and FAK. Can evoke collapse of embryonic neuronal growth cone and regulates dendritic spine morphogenesis. In Sus scrofa (Pig), this protein is Ephrin-A1 (EFNA1).